A 130-amino-acid chain; its full sequence is Flagellar assembly factor FliW (130 aa).

Belongs to the FliW family. In terms of assembly, interacts with translational regulator CsrA and flagellin(s).

Its subcellular location is the cytoplasm. Acts as an anti-CsrA protein, binds CsrA and prevents it from repressing translation of its target genes, one of which is flagellin. Binds to flagellin and participates in the assembly of the flagellum. The protein is Flagellar assembly factor FliW of Borreliella burgdorferi (strain ATCC 35210 / DSM 4680 / CIP 102532 / B31) (Borrelia burgdorferi).